A 314-amino-acid chain; its full sequence is Ribosomal protein uL3 glutamine methyltransferase (314 aa).

Belongs to the protein N5-glutamine methyltransferase family. PrmB subfamily.

It catalyses the reaction L-glutaminyl-[ribosomal protein uL3] + S-adenosyl-L-methionine = N(5)-methyl-L-glutaminyl-[ribosomal protein uL3] + S-adenosyl-L-homocysteine + H(+). Functionally, methylates large ribosomal subunit protein uL3 on a specific glutamine residue. The polypeptide is Ribosomal protein uL3 glutamine methyltransferase (Francisella tularensis subsp. tularensis (strain SCHU S4 / Schu 4)).